Consider the following 425-residue polypeptide: Serine hydroxymethyltransferase (425 aa).

(6S)-5,6,7,8-tetrahydrofolate is bound by residues L123 and 127 to 129 (GHL). K232 is modified (N6-(pyridoxal phosphate)lysine). Residue E248 coordinates (6S)-5,6,7,8-tetrahydrofolate.

This sequence belongs to the SHMT family. In terms of assembly, homodimer. Pyridoxal 5'-phosphate serves as cofactor.

The protein resides in the cytoplasm. The enzyme catalyses (6R)-5,10-methylene-5,6,7,8-tetrahydrofolate + glycine + H2O = (6S)-5,6,7,8-tetrahydrofolate + L-serine. The protein operates within one-carbon metabolism; tetrahydrofolate interconversion. Its pathway is amino-acid biosynthesis; glycine biosynthesis; glycine from L-serine: step 1/1. Catalyzes the reversible interconversion of serine and glycine with tetrahydrofolate (THF) serving as the one-carbon carrier. This reaction serves as the major source of one-carbon groups required for the biosynthesis of purines, thymidylate, methionine, and other important biomolecules. Also exhibits THF-independent aldolase activity toward beta-hydroxyamino acids, producing glycine and aldehydes, via a retro-aldol mechanism. The polypeptide is Serine hydroxymethyltransferase (Anaplasma phagocytophilum (strain HZ)).